The primary structure comprises 145 residues: MIGLIQRVSEANVTVAGEVIGEIGKGMLVLLGVEKEDGDAEIEKLANKLCRYRMFSDEDGKMNLNIEQVGGEILVVSQFTLVADTQKGNRPGFSRGATPEHGEAIYKKFVHALRAKGMAVSTGEFGADMQVGLVNDGPVTFHFNV.

The Gly-cisPro motif, important for rejection of L-amino acids signature appears at 137–138; the sequence is GP.

Belongs to the DTD family. In terms of assembly, homodimer.

It localises to the cytoplasm. The catalysed reaction is glycyl-tRNA(Ala) + H2O = tRNA(Ala) + glycine + H(+). It carries out the reaction a D-aminoacyl-tRNA + H2O = a tRNA + a D-alpha-amino acid + H(+). Its function is as follows. An aminoacyl-tRNA editing enzyme that deacylates mischarged D-aminoacyl-tRNAs. Also deacylates mischarged glycyl-tRNA(Ala), protecting cells against glycine mischarging by AlaRS. Acts via tRNA-based rather than protein-based catalysis; rejects L-amino acids rather than detecting D-amino acids in the active site. By recycling D-aminoacyl-tRNA to D-amino acids and free tRNA molecules, this enzyme counteracts the toxicity associated with the formation of D-aminoacyl-tRNA entities in vivo and helps enforce protein L-homochirality. This is D-aminoacyl-tRNA deacylase from Alteromonas mediterranea (strain DSM 17117 / CIP 110805 / LMG 28347 / Deep ecotype).